A 471-amino-acid chain; its full sequence is Glutamate--tRNA ligase (471 aa).

The short motif at 9–19 (PSPTGYLHVGG) is the 'HIGH' region element. Positions 98, 100, 125, and 127 each coordinate Zn(2+). The 'KMSKS' region motif lies at 237–241 (KLSKR). An ATP-binding site is contributed by Lys240.

The protein belongs to the class-I aminoacyl-tRNA synthetase family. Glutamate--tRNA ligase type 1 subfamily. Monomer. Zn(2+) is required as a cofactor.

It is found in the cytoplasm. It catalyses the reaction tRNA(Glu) + L-glutamate + ATP = L-glutamyl-tRNA(Glu) + AMP + diphosphate. In terms of biological role, catalyzes the attachment of glutamate to tRNA(Glu) in a two-step reaction: glutamate is first activated by ATP to form Glu-AMP and then transferred to the acceptor end of tRNA(Glu). The sequence is that of Glutamate--tRNA ligase from Shigella boydii serotype 18 (strain CDC 3083-94 / BS512).